The chain runs to 201 residues: UPF0301 protein RHA1_ro03630 (201 aa).

Belongs to the UPF0301 (AlgH) family.

This is UPF0301 protein RHA1_ro03630 from Rhodococcus jostii (strain RHA1).